The primary structure comprises 588 residues: Aspartate--tRNA ligase (588 aa).

Position 172 (Glu-172) interacts with L-aspartate. The aspartate stretch occupies residues 196–199 (QLFK). Arg-218 lines the L-aspartate pocket. ATP is bound by residues 218 to 220 (RDE) and Gln-227. His-449 is a binding site for L-aspartate. Residue Glu-483 participates in ATP binding. Arg-490 is a binding site for L-aspartate. An ATP-binding site is contributed by 535 to 538 (GLDR).

Belongs to the class-II aminoacyl-tRNA synthetase family. Type 1 subfamily. As to quaternary structure, homodimer.

The protein resides in the cytoplasm. The catalysed reaction is tRNA(Asp) + L-aspartate + ATP = L-aspartyl-tRNA(Asp) + AMP + diphosphate. Functionally, catalyzes the attachment of L-aspartate to tRNA(Asp) in a two-step reaction: L-aspartate is first activated by ATP to form Asp-AMP and then transferred to the acceptor end of tRNA(Asp). The protein is Aspartate--tRNA ligase of Haemophilus influenzae (strain ATCC 51907 / DSM 11121 / KW20 / Rd).